The following is a 296-amino-acid chain: Malonyl-[acyl-carrier protein] O-methyltransferase (296 aa).

Belongs to the methyltransferase superfamily.

The enzyme catalyses malonyl-[ACP] + S-adenosyl-L-methionine = malonyl-[ACP] methyl ester + S-adenosyl-L-homocysteine. Its pathway is cofactor biosynthesis; biotin biosynthesis. Converts the free carboxyl group of a malonyl-thioester to its methyl ester by transfer of a methyl group from S-adenosyl-L-methionine (SAM). It allows to synthesize pimeloyl-ACP via the fatty acid synthetic pathway. In Methylovorus sp. (strain MP688), this protein is Malonyl-[acyl-carrier protein] O-methyltransferase.